Reading from the N-terminus, the 179-residue chain is Gut granule loss protein 3 (179 aa).

The tract at residues 40–59 (DLDSASSGVGSSTCTEEQES) is disordered. Positions 42–54 (DSASSGVGSSTCT) are enriched in polar residues.

The polypeptide is Gut granule loss protein 3 (glo-3) (Caenorhabditis elegans).